Consider the following 580-residue polypeptide: Trafficking protein particle complex subunit 14 (580 aa).

Disordered stretches follow at residues 90-138 (GMPG…ATTL) and 480-533 (VSHP…RSGS). Over residues 105-116 (PGGGDPGGGGLF) the composition is skewed to gly residues. Residues 124-137 (THGPGPATSGGATT) show a composition bias toward low complexity. Serine 491 carries the post-translational modification Phosphoserine. Over residues 492–502 (RKSSPSSPAVR) the composition is skewed to low complexity. Polar residues predominate over residues 512–525 (LGRSQSFSHQQPSR). Serine 517 carries the post-translational modification Phosphoserine. At threonine 541 the chain carries Phosphothreonine. The residue at position 546 (serine 546) is a Phosphoserine.

Component of the multisubunit TRAPP II complex, which includes at least TRAPPC1, TRAPPC2, TRAPPC2L, TRAPPC3, TRAPPC4, TRAPPC5, TRAPPC6A/B, TRAPPC9, TRAPPC10 and TRAPPC14. TRAPPC9, TRAPPC10 and TRAPPC14 are specific subunits of the TRAPP II complex. Interacts with alpha-tubulin during mitosis. Interacts with RAB3IP (via the N-terminal region); this interaction mediates RAB3IP association with the TRAPP II complex. Interacts with TRAPPC10. Interacts with FBF1. Broadly expressed. High levels in brain, cerebellum, testis and whole blood.

It is found in the cytoplasm. The protein resides in the cytoskeleton. It localises to the spindle. The protein localises to the vesicle. Its subcellular location is the midbody. Functionally, specific subunit of the TRAPP (transport protein particle) II complex, a highly conserved vesicle tethering complex that functions in late Golgi trafficking as a membrane tether. TRAPP II complex also has GEF activity toward RAB1A. TRAPPC14 is dispensable for TRAPPII complex integrity but mediates RAB3IP preciliary vesicle trafficking to the mother centriole during ciliogenesis. Modulates YAP1 activity as transcriptional regulator. The chain is Trafficking protein particle complex subunit 14 from Homo sapiens (Human).